Here is a 430-residue protein sequence, read N- to C-terminus: MGLFDKVKQFANSNNNNNDSGNNNQGDYVTKAENMIGEDRVNQFKSKIGEDRFDKMESKVRQQFSNTSINDNDSNNNDSYGSNNNDSYGSNNNDSYGSNNNDSYGSNNNDSYGSNNDDSYGSSNKKKSSYGSNNDDSYGSSNNNDSYGSNNNDSYGSNNNDSYGSNNDDSYGSSNKNKSSYGSNNDDSYGSNNDDSYGSSNKKKSSYGSSNNDSYGSNNDDSYGSNNNDSYGSNNDDSYGSSNKKKSSYGSNNDDSYGSSNNNDSYGSNNDDSYGSSNKNKSSYGSSSNDDSYGSSNNDDSYGSSNKKKSSYGSNNDDSYGSNNDDSYGSSNKKKSSYGSSNNDSYGSNNDDSYGSSNKKKSSYGSNNDDSYGSSNNNDSYGSNNDDSYGSSNRNKNSYGSSNYGSSNNDDSYGSSNRGGRNQYGGDDDY.

The disordered stretch occupies residues 1-430 (MGLFDKVKQF…RNQYGGDDDY (430 aa)). The segment covering 12-27 (NSNNNNNDSGNNNQGD) has biased composition (low complexity). The segment covering 37-60 (GEDRVNQFKSKIGEDRFDKMESKV) has biased composition (basic and acidic residues). The span at 70–421 (NDNDSNNNDS…SYGSSNRGGR (352 aa)) shows a compositional bias: low complexity. 6 consecutive repeat copies span residues 74 to 81 (SNNNDSYG), 82 to 89 (SNNNDSYG), 90 to 97 (SNNNDSYG), 98 to 105 (SNNNDSYG), 106 to 113 (SNNNDSYG), and 114 to 121 (SNNDDSYG). The interval 74-414 (SNNNDSYGSN…GSSNNDDSYG (341 aa)) is 38 X 8 AA approximate tandem repeats of S-[NS]-N-[ND]-D-S-Y-G. The stretch at 124–131 (NKKKSSYG) is one 7; approximate repeat. 5 tandem repeats follow at residues 132–139 (SNNDDSYG), 141–148 (SNNNDSYG), 149–156 (SNNNDSYG), 157–164 (SNNNDSYG), and 165–172 (SNNDDSYG). One copy of the 13; approximate repeat lies at 175-182 (NKNKSSYG). Residues S183 and S191 each carry the phosphoserine modification. Tandem repeats lie at residues 183 to 190 (SNNDDSYG) and 191 to 198 (SNNDDSYG). One copy of the 16; approximate repeat lies at 201–208 (NKKKSSYG). 4 repeat units span residues 209–216 (SSNNDSYG), 217–224 (SNNDDSYG), 225–232 (SNNNDSYG), and 233–240 (SNNDDSYG). Residues 243–250 (NKKKSSYG) form a 21; approximate repeat. A run of 3 repeats spans residues 251-258 (SNNDDSYG), 260-267 (SNNNDSYG), and 268-275 (SNNDDSYG). One copy of the 25; approximate repeat lies at 278-285 (NKNKSSYG). 2 tandem repeats follow at residues 287-294 (SSNDDSYG) and 296-303 (SNNDDSYG). The stretch at 306–313 (NKKKSSYG) is one 28; approximate repeat. S314 and S322 each carry phosphoserine. 2 repeat units span residues 314–321 (SNNDDSYG) and 322–329 (SNNDDSYG). The stretch at 332-339 (NKKKSSYG) is one 31; approximate repeat. 2 repeat units span residues 340-347 (SSNNDSYG) and 348-355 (SNNDDSYG). The 34; approximate repeat unit spans residues 358 to 365 (NKKKSSYG). Tandem repeats lie at residues 366–373 (SNNDDSYG) and 375–382 (SNNNDSYG). The stretch at 393–400 (NRNKNSYG) is one 37; approximate repeat. Copy 38 of the repeat occupies 407–414 (SNNDDSYG).

It belongs to the DDR48 family. In terms of processing, probably highly glycosylated.

In terms of biological role, DNA damage-responsive protein that may be required for maintaining the rate of spontaneous mutagenesis. Shows low ATP and GTP hydrolysis activity. Dispensable for acquisition of thermotolerance and does not play a significant role in recovery or protection of cells from acute heat shock. The polypeptide is Stress protein DDR48 (DDR48) (Saccharomyces cerevisiae (strain ATCC 204508 / S288c) (Baker's yeast)).